Here is a 472-residue protein sequence, read N- to C-terminus: Ribulose bisphosphate carboxylase large chain 1 (472 aa).

Substrate is bound by residues asparagine 115 and threonine 165. Catalysis depends on lysine 167, which acts as the Proton acceptor. Lysine 169 is a substrate binding site. Lysine 193, aspartate 195, and glutamate 196 together coordinate Mg(2+). N6-carboxylysine is present on lysine 193. Histidine 286 acts as the Proton acceptor in catalysis. The substrate site is built by arginine 287, histidine 319, and serine 371.

Belongs to the RuBisCO large chain family. Type I subfamily. Heterohexadecamer of 8 large chains and 8 small chains. Requires Mg(2+) as cofactor.

The enzyme catalyses 2 (2R)-3-phosphoglycerate + 2 H(+) = D-ribulose 1,5-bisphosphate + CO2 + H2O. The catalysed reaction is D-ribulose 1,5-bisphosphate + O2 = 2-phosphoglycolate + (2R)-3-phosphoglycerate + 2 H(+). Functionally, ruBisCO catalyzes two reactions: the carboxylation of D-ribulose 1,5-bisphosphate, the primary event in carbon dioxide fixation, as well as the oxidative fragmentation of the pentose substrate. Both reactions occur simultaneously and in competition at the same active site. This Allochromatium vinosum (strain ATCC 17899 / DSM 180 / NBRC 103801 / NCIMB 10441 / D) (Chromatium vinosum) protein is Ribulose bisphosphate carboxylase large chain 1.